A 463-amino-acid chain; its full sequence is Putative glycine--tRNA ligase, cytoplasmic (463 aa).

The disordered stretch occupies residues 25 to 54; that stretch reads TLEDSHAAKPETNAAIELPNKSKPEKSAVE. Over residues 44-54 the composition is skewed to basic and acidic residues; sequence NKSKPEKSAVE. R153 and E239 together coordinate substrate. ATP is bound by residues 271–273 and 281–286; these read RNE and LRTREF. Residues 286–290 and N376 each bind substrate; that span reads FTLAE. ATP is bound at residue 398 to 399; the sequence is EC.

It belongs to the class-II aminoacyl-tRNA synthetase family. In terms of assembly, homodimer.

Its subcellular location is the cytoplasm. It catalyses the reaction tRNA(Gly) + glycine + ATP = glycyl-tRNA(Gly) + AMP + diphosphate. In terms of biological role, catalyzes the attachment of glycine to tRNA(Gly). Is also able produce diadenosine tetraphosphate (Ap4A), a universal pleiotropic signaling molecule needed for cell regulation pathways, by direct condensation of 2 ATPs. In Arabidopsis thaliana (Mouse-ear cress), this protein is Putative glycine--tRNA ligase, cytoplasmic.